Consider the following 691-residue polypeptide: Elongation factor G (691 aa).

Residues 8-283 form the tr-type G domain; it reads EDYRNFGIMA…AVVDYLPSPV (276 aa). Residues 17 to 24, 81 to 85, and 135 to 138 contribute to the GTP site; these read AHIDAGKT, DTPGH, and NKMD.

Belongs to the TRAFAC class translation factor GTPase superfamily. Classic translation factor GTPase family. EF-G/EF-2 subfamily.

The protein resides in the cytoplasm. Its function is as follows. Catalyzes the GTP-dependent ribosomal translocation step during translation elongation. During this step, the ribosome changes from the pre-translocational (PRE) to the post-translocational (POST) state as the newly formed A-site-bound peptidyl-tRNA and P-site-bound deacylated tRNA move to the P and E sites, respectively. Catalyzes the coordinated movement of the two tRNA molecules, the mRNA and conformational changes in the ribosome. The chain is Elongation factor G from Methylorubrum populi (strain ATCC BAA-705 / NCIMB 13946 / BJ001) (Methylobacterium populi).